We begin with the raw amino-acid sequence, 388 residues long: LL-diaminopimelate aminotransferase (388 aa).

2 residues coordinate substrate: tyrosine 16 and glycine 41. Pyridoxal 5'-phosphate-binding positions include tyrosine 70, 104–105, tyrosine 129, asparagine 179, tyrosine 210, and 239–241; these read SK and SLS. Substrate-binding residues include lysine 105, tyrosine 129, and asparagine 179. The residue at position 242 (lysine 242) is an N6-(pyridoxal phosphate)lysine. Position 250 (arginine 250) interacts with pyridoxal 5'-phosphate. Residue arginine 368 coordinates substrate.

The protein belongs to the class-I pyridoxal-phosphate-dependent aminotransferase family. LL-diaminopimelate aminotransferase subfamily. Homodimer. Pyridoxal 5'-phosphate serves as cofactor.

It carries out the reaction (2S,6S)-2,6-diaminopimelate + 2-oxoglutarate = (S)-2,3,4,5-tetrahydrodipicolinate + L-glutamate + H2O + H(+). The protein operates within amino-acid biosynthesis; L-lysine biosynthesis via DAP pathway; LL-2,6-diaminopimelate from (S)-tetrahydrodipicolinate (aminotransferase route): step 1/1. Involved in the synthesis of meso-diaminopimelate (m-DAP or DL-DAP), required for both lysine and peptidoglycan biosynthesis. Catalyzes the direct conversion of tetrahydrodipicolinate to LL-diaminopimelate. This chain is LL-diaminopimelate aminotransferase, found in Oleidesulfovibrio alaskensis (strain ATCC BAA-1058 / DSM 17464 / G20) (Desulfovibrio alaskensis).